A 92-amino-acid chain; its full sequence is Probable Fe(2+)-trafficking protein (92 aa).

This sequence belongs to the Fe(2+)-trafficking protein family.

Could be a mediator in iron transactions between iron acquisition and iron-requiring processes, such as synthesis and/or repair of Fe-S clusters in biosynthetic enzymes. This chain is Probable Fe(2+)-trafficking protein, found in Shewanella pealeana (strain ATCC 700345 / ANG-SQ1).